Consider the following 132-residue polypeptide: Small ribosomal subunit protein uS8 (132 aa).

It belongs to the universal ribosomal protein uS8 family. In terms of assembly, part of the 30S ribosomal subunit. Contacts proteins S5 and S12.

Functionally, one of the primary rRNA binding proteins, it binds directly to 16S rRNA central domain where it helps coordinate assembly of the platform of the 30S subunit. The protein is Small ribosomal subunit protein uS8 of Alkaliphilus oremlandii (strain OhILAs) (Clostridium oremlandii (strain OhILAs)).